A 187-amino-acid chain; its full sequence is Ubiquinol-cytochrome c reductase iron-sulfur subunit (187 aa).

The helical transmembrane segment at 15 to 35 (LYYATAGAGAVATGAAVWPLI) threads the bilayer. Positions 89–185 (QLGQLVDTNA…AKFIDETTIQ (97 aa)) constitute a Rieske domain. Residues Cys129, His131, Cys149, and His152 each coordinate [2Fe-2S] cluster. Residues Cys134 and Cys151 are joined by a disulfide bond.

It belongs to the Rieske iron-sulfur protein family. The main subunits of complex b-c1 are: cytochrome b, cytochrome c1 and the Rieske protein. It depends on [2Fe-2S] cluster as a cofactor.

The protein localises to the cell membrane. The catalysed reaction is a quinol + 2 Fe(III)-[cytochrome c](out) = a quinone + 2 Fe(II)-[cytochrome c](out) + 2 H(+)(out). In terms of biological role, component of the ubiquinol-cytochrome c reductase complex (complex III or cytochrome b-c1 complex), which is a respiratory chain that generates an electrochemical potential coupled to ATP synthesis. This Cereibacter sphaeroides (Rhodobacter sphaeroides) protein is Ubiquinol-cytochrome c reductase iron-sulfur subunit (petA).